The chain runs to 161 residues: Phosphopantetheine adenylyltransferase (161 aa).

Threonine 9 lines the substrate pocket. ATP is bound by residues 9–10 (TF) and histidine 17. Lysine 41, leucine 73, and arginine 87 together coordinate substrate. Residues 88–90 (GLR), glutamate 98, and 123–129 (LSYISST) contribute to the ATP site.

The protein belongs to the bacterial CoaD family. In terms of assembly, homohexamer. Mg(2+) serves as cofactor.

The protein resides in the cytoplasm. The catalysed reaction is (R)-4'-phosphopantetheine + ATP + H(+) = 3'-dephospho-CoA + diphosphate. It functions in the pathway cofactor biosynthesis; coenzyme A biosynthesis; CoA from (R)-pantothenate: step 4/5. Reversibly transfers an adenylyl group from ATP to 4'-phosphopantetheine, yielding dephospho-CoA (dPCoA) and pyrophosphate. This is Phosphopantetheine adenylyltransferase from Hahella chejuensis (strain KCTC 2396).